The sequence spans 192 residues: dTDP-4-amino-4,6-dideoxy-D-glucose acyltransferase (192 aa).

It belongs to the transferase hexapeptide repeat family.

The catalysed reaction is dTDP-4-amino-4,6-dideoxy-alpha-D-glucose + acetyl-CoA = dTDP-4-acetamido-4,6-dideoxy-alpha-D-glucose + CoA + H(+). Its pathway is bacterial outer membrane biogenesis; lipopolysaccharide biosynthesis. In terms of biological role, catalyzes the conversion of dTDP-4-amino-4,6-dideoxy-D-glucose (dTDP-D-Qui4N) to dTDP-4-acetamido-4,6-dideoxy-D-glucose (dTDP-D-Qui4NAc). This is dTDP-4-amino-4,6-dideoxy-D-glucose acyltransferase (vioB) from Escherichia coli.